Consider the following 753-residue polypeptide: Bifunctional terpene synthase FUP1 (753 aa).

A terpene cyclase region spans residues 1–329 (MGPLLYRSRH…CSACPRQNAW (329 aa)). Asp96 lines the Mg(2+) pocket. Positions 96–100 (DDTGE) match the DDXXD 1 motif. The short motif at 231–239 (NDYFSWERE) is the NSE/DTE element. The interval 330–745 (KNDTLSNGQN…MLRLCLAKLS (416 aa)) is prenyltransferase. The isopentenyl diphosphate site is built by Lys461, Arg464, and His493. Residues Asp500 and Asp504 each coordinate Mg(2+). The DDXXD 2 signature appears at 500-504 (DDLED). Arg509 provides a ligand contact to dimethylallyl diphosphate. Position 510 (Arg510) interacts with isopentenyl diphosphate. Positions 587, 588, 625, 632, 640, and 650 each coordinate dimethylallyl diphosphate.

This sequence in the N-terminal section; belongs to the terpene synthase family. In the C-terminal section; belongs to the FPP/GGPP synthase family. In terms of assembly, hexamer. Mg(2+) is required as a cofactor.

It catalyses the reaction isopentenyl diphosphate + (2E,6E)-farnesyl diphosphate = (2E,6E,10E)-geranylgeranyl diphosphate + diphosphate. It functions in the pathway secondary metabolite biosynthesis; terpenoid biosynthesis. In terms of biological role, bifunctional terpene synthase; part of the gene cluster that mediates the biosynthesis of the mycotoxin fusaproliferin (FUP) that belongs to the class of bicyclic sesterterpenoids. The FUP biosynthetic pathway starts with the enzyme encoded by FUP1 that combines a C-terminal prenyltransferase domain responsible for the synthesis of geranylgeranyl diphosphate with the N-terminal terpene cyclase domain, to yield preterpestacin I. Preterpestacin I is then decorated by oxygenation steps that are catalyzed by two cytochrome P450 monooxygenases. First, FUP2 introduces a hydroxyl group at the C-24 position resulting in the formation of preterpestacin IIa, which can be further oxidized. The second P450 monooxygenase catalyzes the hydroxylation at C-16 and C-17 of preterpestacin IIa, producing preterpestacin III. Subsequently, the FAD-dependent oxidoreductase FUP4 catalyzes the oxidation of the hydroxy group at the C-16 position to a keto group, leading to the formation of (-)-terpestacin, which is the immediate precursor of FUP. The final step in the proposed biosynthetic pathway is the addition of an acetyl group at the C-24 position of terpestacin, which is catalyzed by the acetyltransferase FUP5. This Fusarium proliferatum (strain ET1) (Orchid endophyte fungus) protein is Bifunctional terpene synthase FUP1.